The primary structure comprises 1017 residues: DNA replication licensing factor MCM6 (1017 aa).

2 disordered regions span residues 1–94 (MSSP…SFKS) and 200–257 (SDSL…TSPE). Positions 24 to 34 (SIGAGFGSSSG) are enriched in low complexity. Residues 35 to 83 (LDSQIGSRLHFPSSSQPHVSNSQTGPFVNDSTQFSSQRLQTDGSATNDM) are compositionally biased toward polar residues. A Phosphoserine modification is found at Ser78. Residues 209-223 (DEGQADEDEQQDDDM) are compositionally biased toward acidic residues. Residues 224–257 (NGSSLPRDSGSSAAPGNGTSAMATRSITTSTSPE) show a composition bias toward polar residues. Residues Ser249 and Ser372 each carry the phosphoserine modification. In terms of domain architecture, MCM spans 525–732 (IYDKLVRSIA…IDTELASHIV (208 aa)). Position 575–582 (575–582 (GDPSTSKS)) interacts with ATP. Residues 707–710 (SRFD) carry the Arginine finger motif. The residue at position 766 (Thr766) is a Phosphothreonine. The interval 852–901 (IESQSHAASGNNDDNDDGTGSGVITSEPPADIEEGQSEATARPGTSEKKK) is disordered.

Belongs to the MCM family. As to quaternary structure, component of the MCM2-7 complex. The complex forms a toroidal hexameric ring with the proposed subunit order MCM2-MCM6-MCM4-MCM7-MCM3-MCM5; loaded onto DNA, forms a head-head double hexamer. Interacts with MCM10.

The protein localises to the nucleus. It carries out the reaction ATP + H2O = ADP + phosphate + H(+). Acts as a component of the MCM2-7 complex (MCM complex) which is the putative replicative helicase essential for 'once per cell cycle' DNA replication initiation and elongation in eukaryotic cells. The active ATPase sites in the MCM2-7 ring are formed through the interaction surfaces of two neighboring subunits such that a critical structure of a conserved arginine finger motif is provided in trans relative to the ATP-binding site of the Walker A box of the adjacent subunit. The six ATPase active sites, however, are likely to contribute differentially to the complex helicase activity. Once loaded onto DNA, double hexamers can slide on dsDNA in the absence of ATPase activity. Required for the entry in S phase and for cell division. The sequence is that of DNA replication licensing factor MCM6 (MCM6) from Saccharomyces cerevisiae (strain ATCC 204508 / S288c) (Baker's yeast).